Consider the following 897-residue polypeptide: 3'-5' exonuclease DinG (897 aa).

The 154-residue stretch at 8–161 (VVDLETTGNQ…DEDAATTAKL (154 aa)) folds into the Exonuclease domain. Residues 241 to 496 (SKAVDQLGLT…KAIDQLEKQR (256 aa)) form the Helicase ATP-binding domain. 276 to 283 (ASLGSGKS) serves as a coordination point for ATP. Positions 448–451 (DEAH) match the DEAH box motif. Positions 703–893 (NIDEYVASIV…QFGKLLRQIQ (191 aa)) constitute a Helicase C-terminal domain.

Belongs to the helicase family. DinG subfamily. Type 2 sub-subfamily.

In terms of biological role, 3'-5' exonuclease. The polypeptide is 3'-5' exonuclease DinG (Staphylococcus aureus (strain USA300)).